Reading from the N-terminus, the 1364-residue chain is Toxin subunit YenA2 (1364 aa).

The stretch at 1025-1080 (SESYRRRRQEWELQYKQAEWEVNSVEQQINLQNMQIKAANKRLEQVEAQQQQAMAL) forms a coiled coil.

Semipurified toxin complex consists of at least YenA1-YenA2-YenB-YenC1-YenC2-Chi1-Chi2. The Yen-TC:K9 subcomplex is about 26 nm tall and 22 nm in diameter with 5-fold symmetry and 5 copies of YenA1, YenA2, Chi1 and Chi2; the chitinase subunits may be solvent accessible on the exterior the complex. The Yen-TC:K9 subcomplex has no insecticidal activity. The native complex with additional YenB, YenC1 and YenC2 subunits is 16 nm taller and is insecticidal; the toxicity-conferring subunits are present at about 1 copy each. In terms of processing, the isolated toxin complex includes 3 peptides starting between residues 768 and 778 of this protein, which might be physiologically relevant.

Its subcellular location is the secreted. Its function is as follows. Part of an orally active toxin complex (TC) with strong insecticidal effects on larvae of the Coleoptera Costelytra zealandica, Acrossidius tasmania and Adoryphorus couloni and some Lepidoptera larvae. The TC has an endochitinase activity. In Yersinia entomophaga, this protein is Toxin subunit YenA2.